A 1295-amino-acid polypeptide reads, in one-letter code: MEILRGSPALSAFRINKLLVRCRDARLAVDDIYAEYIHFADVSAALDEDALSRLQRLLKYGPSLAEHQPQGRLLLVTPRPGTRSPWSSKATDIAHNCGLPQIKRLERGLAYYIQAPQLSEPQWGYLAALLHDRMMETVFTRLEEAAALFAQHAPAPVTLVDVLGEGRGALEAANLALGLALAQDEIDYLFAAFTRLGRNPSDVELYMFAQANSEHCRHKIFNADWVIDGQPQAKSLFKMIKNTFEQTPEYVLSAYKDNASVMEGSAVGRFFPDAQAGRYDYHQEATHILMKVETHNHPTAISPWPGAATGSGGEIRDEGATGRGAKPKAGLVGFSVSNLRIPGFEQPWEEDFGRPERIVSALDIMTDGPLGGAAFNNEFGRPALTGYFRTYEERVDSHNGVELRGYHKPVMLAGGIGNIRASHVQKGEISVGAKLIVLGGPAMNIGLGGGAASSMASGQSDADLDFASVQRDNPEMERRCQEVIDRCWQRGEENPILFIHDVGAGGLSNAMPELVSDGGRGGRFQLREIPNDEPGMSPLEVWCNESQERYVMAVAPERLAEFDAICRRECAPYAVIGEATDALHLSLDDAHYDNRPIDLPLDVLLGKTPKMQREAVSLQAAGFPLNRDGIKLAEAINRVLHLPAVAEKTFLITIGDRSVTGMVARDQMVGPWQVPVADCAVTTASLDSYYGEAMSLGERAPVALLNFAASARLAVGEALTNLAATHIGDIKRVKLSANWMAAAGHPGEDAGLYQAVKAVGEELCPALGLTIPVGKDSMSMKTRWQHGAESREMTAPLSLVITAFARVEDVRATVTPQLQPARDNVLLLIDLGAGHHALGATALAQVYRQLGDETSDVRDAGQLAAFFRVMQQLVAQGWLLAYHDRADGGLLVTLAEMAFAGHCGIDADIGPLGDDALAALFNEELGAVIQIDEADRDAITALFHQEGLADCLHYLGTAQPGDRFILRAGERSLYSESRTTLRTWWAETSWQMQRLRDNPESADQEHASRQDDNDPGLTVALSFDPKDDIAAPFIAKGARPKVAVLREQGVNSHVEMAAAFHRAGFEAIDVHMSDLFTGVQTLEGFHTLVACGGFSYGDVLGAGEGWAKSVLFNLRVRDEFEAFFHRPQTLALGVCNGCQMMSNLRELIPGAELWPRFVRNKSERFEARFSLVEVTQSQSLLLQGMVGSRLPIAVSHGEGRVEVRDAAHLAAIEHAGLVALRYVDNYGKVTENYPANPNGSPNGITAVTNASGRVTLTMPHPERVFRTVSHSWHPAEWGEDGPWMRLFRNARKQLG.

The disordered stretch occupies residues 304–326; sequence WPGAATGSGGEIRDEGATGRGAK. ATP-binding positions include 306–317, 385–387, and Ala-677; these read GAATGSGGEIRD and TGY. Asp-678, Glu-717, Asn-721, and Asp-884 together coordinate Mg(2+). Over residues 995–1012 the composition is skewed to basic and acidic residues; it reads LRDNPESADQEHASRQDD. Residues 995-1017 form a disordered region; sequence LRDNPESADQEHASRQDDNDPGL. Positions 1042–1295 constitute a Glutamine amidotransferase type-1 domain; it reads VAVLREQGVN…LFRNARKQLG (254 aa). Cys-1135 acts as the Nucleophile in catalysis. Active-site residues include His-1260 and Glu-1262.

This sequence in the N-terminal section; belongs to the FGAMS family. Monomer.

It is found in the cytoplasm. The catalysed reaction is N(2)-formyl-N(1)-(5-phospho-beta-D-ribosyl)glycinamide + L-glutamine + ATP + H2O = 2-formamido-N(1)-(5-O-phospho-beta-D-ribosyl)acetamidine + L-glutamate + ADP + phosphate + H(+). It participates in purine metabolism; IMP biosynthesis via de novo pathway; 5-amino-1-(5-phospho-D-ribosyl)imidazole from N(2)-formyl-N(1)-(5-phospho-D-ribosyl)glycinamide: step 1/2. Functionally, phosphoribosylformylglycinamidine synthase involved in the purines biosynthetic pathway. Catalyzes the ATP-dependent conversion of formylglycinamide ribonucleotide (FGAR) and glutamine to yield formylglycinamidine ribonucleotide (FGAM) and glutamate. The polypeptide is Phosphoribosylformylglycinamidine synthase (Sodalis glossinidius (strain morsitans)).